Consider the following 362-residue polypeptide: Probable dual-specificity RNA methyltransferase RlmN (362 aa).

The Proton acceptor role is filled by glutamate 105. Residues 111–344 (HNYGNSVCVT…VTIRREQGHD (234 aa)) form the Radical SAM core domain. An intrachain disulfide couples cysteine 118 to cysteine 349. [4Fe-4S] cluster contacts are provided by cysteine 125, cysteine 129, and cysteine 132. Residues 175–176 (GE), serine 207, 230–232 (SLH), and asparagine 306 each bind S-adenosyl-L-methionine. Cysteine 349 acts as the S-methylcysteine intermediate in catalysis.

The protein belongs to the radical SAM superfamily. RlmN family. Requires [4Fe-4S] cluster as cofactor.

It localises to the cytoplasm. It catalyses the reaction adenosine(2503) in 23S rRNA + 2 reduced [2Fe-2S]-[ferredoxin] + 2 S-adenosyl-L-methionine = 2-methyladenosine(2503) in 23S rRNA + 5'-deoxyadenosine + L-methionine + 2 oxidized [2Fe-2S]-[ferredoxin] + S-adenosyl-L-homocysteine. The catalysed reaction is adenosine(37) in tRNA + 2 reduced [2Fe-2S]-[ferredoxin] + 2 S-adenosyl-L-methionine = 2-methyladenosine(37) in tRNA + 5'-deoxyadenosine + L-methionine + 2 oxidized [2Fe-2S]-[ferredoxin] + S-adenosyl-L-homocysteine. Specifically methylates position 2 of adenine 2503 in 23S rRNA and position 2 of adenine 37 in tRNAs. The protein is Probable dual-specificity RNA methyltransferase RlmN of Halalkalibacterium halodurans (strain ATCC BAA-125 / DSM 18197 / FERM 7344 / JCM 9153 / C-125) (Bacillus halodurans).